The chain runs to 220 residues: Glutathione peroxidase (220 aa).

Selenocysteine 64 is a catalytic residue. A non-standard amino acid (selenocysteine) is located at residue selenocysteine 64.

This sequence belongs to the glutathione peroxidase family. In terms of processing, during periods of oxidative stress, Sec-64 may react with a superoxide radical, irreversibly lose hydroselenide and be converted to dehydroalanine.

The catalysed reaction is 2 glutathione + H2O2 = glutathione disulfide + 2 H2O. Its function is as follows. May protect the virus and component of infected cells from oxidative damage by peroxides whose formation may be stimulated by infection. This Homo sapiens (Human) protein is Glutathione peroxidase (GPX1).